The sequence spans 314 residues: Protein YIF1B (314 aa).

N-acetylmethionine is present on Met1. Residues 1 to 12 (MHPAGLAAAAAG) are compositionally biased toward low complexity. The disordered stretch occupies residues 1–55 (MHPAGLAAAAAGTPRLRKWPSKRRIPVSQPGMADPHQLFDDTSSAQSRGYGAQRA). The Cytoplasmic segment spans residues 1 to 156 (MHPAGLAAAA…APRFDVNAPD (156 aa)). Thr13 carries the post-translational modification Phosphothreonine. Basic residues predominate over residues 15-25 (RLRKWPSKRRI). Ser65 is modified (phosphoserine). The helical transmembrane segment at 157–177 (LYIPAMAFITYVLVAGLALGT) threads the bilayer. Topologically, residues 178 to 192 (QDRFSPDLLGLQASS) are extracellular. Residues 193–213 (ALAWLTLEVLAILLSLYLVTV) traverse the membrane as a helical segment. Residues 214 to 219 (NTDLTT) lie on the Cytoplasmic side of the membrane. Residues 220 to 240 (IDLVAFLGYKYVGMIGGVLMG) traverse the membrane as a helical segment. Residue Leu241 is a topological domain, extracellular. A helical membrane pass occupies residues 242 to 262 (LFGKIGYYLVLGWCCVAIFVF). The Cytoplasmic portion of the chain corresponds to 263 to 292 (MIRTLRLKILADAAAEGVPVRGARNQLRMY). Residues 293–313 (LTMAVAAAQPMLMYWLTFHLV) form a helical membrane-spanning segment. Position 314 (Arg314) is a topological domain, extracellular.

The protein belongs to the YIF1 family. In terms of assembly, interacts with HTR1A (via C-terminus). Interacts with ABCB9 (via TMD0); this interaction allows (but is not essential) the ER-to-Golgi trafficking and strongly depends on a salt bridge within TMD0.

The protein localises to the endoplasmic reticulum membrane. Its subcellular location is the golgi apparatus membrane. It localises to the endoplasmic reticulum-Golgi intermediate compartment membrane. Functions in endoplasmic reticulum to Golgi vesicle-mediated transport and regulates the proper organization of the endoplasmic reticulum and the Golgi. Plays a key role in targeting to neuronal dendrites receptors such as HTR1A. Plays also a role in primary cilium and sperm flagellum assembly probably through protein transport to these compartments. The protein is Protein YIF1B of Homo sapiens (Human).